The following is a 240-amino-acid chain: Dihydromonapterin reductase (240 aa).

Tyr-152 (proton acceptor) is an active-site residue.

Belongs to the short-chain dehydrogenases/reductases (SDR) family. FolM subfamily.

The catalysed reaction is (6S)-5,6,7,8-tetrahydrofolate + NADP(+) = 7,8-dihydrofolate + NADPH + H(+). It carries out the reaction 7,8-dihydromonapterin + NADPH + H(+) = 5,6,7,8-tetrahydromonapterin + NADP(+). Catalyzes the reduction of dihydromonapterin to tetrahydromonapterin. Also has lower activity with dihydrofolate. The protein is Dihydromonapterin reductase (folM) of Escherichia coli O6:H1 (strain CFT073 / ATCC 700928 / UPEC).